Reading from the N-terminus, the 243-residue chain is Cytochrome c oxidase subunit 2 (243 aa).

Over Met-1–Gln-34 the chain is Mitochondrial intermembrane. Residues Val-35 to Leu-55 form a helical membrane-spanning segment. The Mitochondrial matrix segment spans residues Arg-56–Glu-74. Residues Phe-75–Tyr-97 traverse the membrane as a helical segment. The Mitochondrial intermembrane segment spans residues Leu-98–Gln-243. Cu cation is bound by residues His-178, Cys-213, Glu-215, Cys-217, His-221, and Met-224. Residue Glu-215 coordinates Mg(2+).

It belongs to the cytochrome c oxidase subunit 2 family. Component of the cytochrome c oxidase (complex IV, CIV), a multisubunit enzyme composed of a catalytic core of 3 subunits and several supernumerary subunits. The complex exists as a monomer or a dimer and forms supercomplexes (SCs) in the inner mitochondrial membrane with ubiquinol-cytochrome c oxidoreductase (cytochrome b-c1 complex, complex III, CIII). Cu cation serves as cofactor.

The protein localises to the mitochondrion inner membrane. The catalysed reaction is 4 Fe(II)-[cytochrome c] + O2 + 8 H(+)(in) = 4 Fe(III)-[cytochrome c] + 2 H2O + 4 H(+)(out). In terms of biological role, component of the cytochrome c oxidase, the last enzyme in the mitochondrial electron transport chain which drives oxidative phosphorylation. The respiratory chain contains 3 multisubunit complexes succinate dehydrogenase (complex II, CII), ubiquinol-cytochrome c oxidoreductase (cytochrome b-c1 complex, complex III, CIII) and cytochrome c oxidase (complex IV, CIV), that cooperate to transfer electrons derived from NADH and succinate to molecular oxygen, creating an electrochemical gradient over the inner membrane that drives transmembrane transport and the ATP synthase. Cytochrome c oxidase is the component of the respiratory chain that catalyzes the reduction of oxygen to water. Electrons originating from reduced cytochrome c in the intermembrane space (IMS) are transferred via the dinuclear copper A center (CU(A)) of subunit 2 and heme A of subunit 1 to the active site in subunit 1, a binuclear center (BNC) formed by heme A3 and copper B (CU(B)). The BNC reduces molecular oxygen to 2 water molecules using 4 electrons from cytochrome c in the IMS and 4 protons from the mitochondrial matrix. The chain is Cytochrome c oxidase subunit 2 from Pneumocystis carinii.